Reading from the N-terminus, the 303-residue chain is UDP-3-O-acyl-N-acetylglucosamine deacetylase (303 aa).

The Zn(2+) site is built by histidine 78, histidine 237, and aspartate 241. The active-site Proton donor is the histidine 264.

This sequence belongs to the LpxC family. Zn(2+) is required as a cofactor.

It carries out the reaction a UDP-3-O-[(3R)-3-hydroxyacyl]-N-acetyl-alpha-D-glucosamine + H2O = a UDP-3-O-[(3R)-3-hydroxyacyl]-alpha-D-glucosamine + acetate. The protein operates within glycolipid biosynthesis; lipid IV(A) biosynthesis; lipid IV(A) from (3R)-3-hydroxytetradecanoyl-[acyl-carrier-protein] and UDP-N-acetyl-alpha-D-glucosamine: step 2/6. Catalyzes the hydrolysis of UDP-3-O-myristoyl-N-acetylglucosamine to form UDP-3-O-myristoylglucosamine and acetate, the committed step in lipid A biosynthesis. In Stenotrophomonas maltophilia (strain K279a), this protein is UDP-3-O-acyl-N-acetylglucosamine deacetylase.